Reading from the N-terminus, the 432-residue chain is Alkaline protease secretion protein AprE (432 aa).

Residues 1-14 (MTRTVKRDENAYAR) are Cytoplasmic-facing. The chain crosses the membrane as a helical span at residues 15–36 (LGWLLVLFGFGGALLWAAFAPL). Topologically, residues 37-432 (DQGVAVPATV…DRAHVALAEN (396 aa)) are periplasmic.

Belongs to the membrane fusion protein (MFP) (TC 8.A.1) family.

The protein resides in the cell inner membrane. In terms of biological role, involved in the secretion of alkaline protease. The polypeptide is Alkaline protease secretion protein AprE (aprE) (Pseudomonas aeruginosa (strain ATCC 15692 / DSM 22644 / CIP 104116 / JCM 14847 / LMG 12228 / 1C / PRS 101 / PAO1)).